The sequence spans 173 residues: Shikimate kinase 1 (173 aa).

14–19 (GAGKST) serves as a coordination point for ATP. Residue Ser18 coordinates Mg(2+). Substrate contacts are provided by Asp36, Arg60, and Gly82. ATP is bound at residue Arg120. Arg140 contributes to the substrate binding site. ATP is bound at residue Gln157.

The protein belongs to the shikimate kinase family. In terms of assembly, monomer. Requires Mg(2+) as cofactor.

It localises to the cytoplasm. It catalyses the reaction shikimate + ATP = 3-phosphoshikimate + ADP + H(+). The protein operates within metabolic intermediate biosynthesis; chorismate biosynthesis; chorismate from D-erythrose 4-phosphate and phosphoenolpyruvate: step 5/7. Its function is as follows. Catalyzes the specific phosphorylation of the 3-hydroxyl group of shikimic acid using ATP as a cosubstrate. This chain is Shikimate kinase 1, found in Shigella boydii serotype 18 (strain CDC 3083-94 / BS512).